Here is a 395-residue protein sequence, read N- to C-terminus: Chaperone protein DnaJ (395 aa).

The 66-residue stretch at 4-69 folds into the J domain; it reads DYYEVLGLSR…DKRRRYDQFG (66 aa). The segment at 151–232 adopts a CR-type zinc-finger fold; sequence GVEKTLKIKK…CYGEGIKQGE (82 aa). 8 residues coordinate Zn(2+): Cys-164, Cys-167, Cys-180, Cys-183, Cys-206, Cys-209, Cys-220, and Cys-223. 4 CXXCXGXG motif repeats span residues 164–171, 180–187, 206–213, and 220–227; these read CTECNGTG, CPTCHGSG, CPTCGGEG, and CVSCYGEG.

This sequence belongs to the DnaJ family. As to quaternary structure, homodimer. Zn(2+) serves as cofactor.

It is found in the cytoplasm. Its function is as follows. Participates actively in the response to hyperosmotic and heat shock by preventing the aggregation of stress-denatured proteins and by disaggregating proteins, also in an autonomous, DnaK-independent fashion. Unfolded proteins bind initially to DnaJ; upon interaction with the DnaJ-bound protein, DnaK hydrolyzes its bound ATP, resulting in the formation of a stable complex. GrpE releases ADP from DnaK; ATP binding to DnaK triggers the release of the substrate protein, thus completing the reaction cycle. Several rounds of ATP-dependent interactions between DnaJ, DnaK and GrpE are required for fully efficient folding. Also involved, together with DnaK and GrpE, in the DNA replication of plasmids through activation of initiation proteins. This is Chaperone protein DnaJ from Chlorobium phaeobacteroides (strain DSM 266 / SMG 266 / 2430).